Here is a 1371-residue protein sequence, read N- to C-terminus: Serine protease pic autotransporter (1371 aa).

Positions 1 to 55 (MNKVYSLKYCPVTGGLIVVSELASRVIKKTCRRLTHILLAGIPAVYLYYPQISQA) are cleaved as a signal peptide. The region spanning 56-301 (GIVRSDIAYQ…NVIPTDYLNQ (246 aa)) is the Peptidase S6 domain. Residues histidine 127, aspartate 155, and serine 258 each act as charge relay system in the active site. The region spanning 1105 to 1371 (DTNGDAGAWA…AVNANFRYMF (267 aa)) is the Autotransporter domain.

Post-translationally, cleaved to release the mature protein from the outer membrane.

It localises to the periplasm. It is found in the secreted. Its subcellular location is the cell surface. The protein localises to the cell outer membrane. Involved in virulence of uropathogenic E.coli although it is not known how it contributes to it. Has no mucinase activity. The polypeptide is Serine protease pic autotransporter (pic) (Escherichia coli O6:H1 (strain CFT073 / ATCC 700928 / UPEC)).